A 400-amino-acid polypeptide reads, in one-letter code: tRNA(Met) cytidine acetate ligase (400 aa).

Residues 7 to 20 (IVEY…HQYH), glycine 101, asparagine 162, and arginine 187 contribute to the ATP site.

The protein belongs to the TmcAL family.

It localises to the cytoplasm. The enzyme catalyses cytidine(34) in elongator tRNA(Met) + acetate + ATP = N(4)-acetylcytidine(34) in elongator tRNA(Met) + AMP + diphosphate. In terms of biological role, catalyzes the formation of N(4)-acetylcytidine (ac(4)C) at the wobble position of elongator tRNA(Met), using acetate and ATP as substrates. First activates an acetate ion to form acetyladenylate (Ac-AMP) and then transfers the acetyl group to tRNA to form ac(4)C34. The sequence is that of tRNA(Met) cytidine acetate ligase from Oceanobacillus iheyensis (strain DSM 14371 / CIP 107618 / JCM 11309 / KCTC 3954 / HTE831).